Consider the following 341-residue polypeptide: Pyrophosphate--fructose 6-phosphate 1-phosphotransferase (341 aa).

Position 10 (Gly10) interacts with diphosphate. Glu103 lines the Mg(2+) pocket. Residues 125-127 (TID), Arg162, 169-171 (MGR), Glu221, Arg265, and 271-274 (HTQR) contribute to the substrate site. Asp127 (proton acceptor) is an active-site residue.

This sequence belongs to the phosphofructokinase type A (PFKA) family. Mixed-substrate PFK group III subfamily. In terms of assembly, homotetramer. Mg(2+) serves as cofactor.

It is found in the cytoplasm. The enzyme catalyses beta-D-fructose 6-phosphate + diphosphate = beta-D-fructose 1,6-bisphosphate + phosphate + H(+). It participates in carbohydrate degradation; glycolysis; D-glyceraldehyde 3-phosphate and glycerone phosphate from D-glucose: step 3/4. With respect to regulation, non-allosteric. Catalyzes the phosphorylation of D-fructose 6-phosphate, the first committing step of glycolysis. Uses inorganic phosphate (PPi) as phosphoryl donor instead of ATP like common ATP-dependent phosphofructokinases (ATP-PFKs), which renders the reaction reversible, and can thus function both in glycolysis and gluconeogenesis. Consistently, PPi-PFK can replace the enzymes of both the forward (ATP-PFK) and reverse (fructose-bisphosphatase (FBPase)) reactions. The polypeptide is Pyrophosphate--fructose 6-phosphate 1-phosphotransferase (Amycolatopsis methanolica).